A 297-amino-acid chain; its full sequence is Phosphoribosylaminoimidazole-succinocarboxamide synthase (297 aa).

Belongs to the SAICAR synthetase family.

The catalysed reaction is 5-amino-1-(5-phospho-D-ribosyl)imidazole-4-carboxylate + L-aspartate + ATP = (2S)-2-[5-amino-1-(5-phospho-beta-D-ribosyl)imidazole-4-carboxamido]succinate + ADP + phosphate + 2 H(+). It participates in purine metabolism; IMP biosynthesis via de novo pathway; 5-amino-1-(5-phospho-D-ribosyl)imidazole-4-carboxamide from 5-amino-1-(5-phospho-D-ribosyl)imidazole-4-carboxylate: step 1/2. This is Phosphoribosylaminoimidazole-succinocarboxamide synthase from Corynebacterium urealyticum (strain ATCC 43042 / DSM 7109).